A 335-amino-acid chain; its full sequence is Luciferase-like monooxygenase (335 aa).

It to bacterial alkanal monooxygenase alpha and beta chains.

The sequence is that of Luciferase-like monooxygenase (yhbW) from Escherichia coli O6:H1 (strain CFT073 / ATCC 700928 / UPEC).